The sequence spans 159 residues: UPF0225 protein plu2503 (159 aa).

This sequence belongs to the UPF0225 family.

The chain is UPF0225 protein plu2503 from Photorhabdus laumondii subsp. laumondii (strain DSM 15139 / CIP 105565 / TT01) (Photorhabdus luminescens subsp. laumondii).